The following is a 373-amino-acid chain: Glutamate 5-kinase (373 aa).

Residue Lys15 coordinates ATP. Positions 55, 142, and 154 each coordinate substrate. Residues 174–175 (TD) and 216–222 (TGGMVTK) contribute to the ATP site. The PUA domain occupies 281–359 (SGRVIVDDGA…GEIEAILGYK (79 aa)).

The protein belongs to the glutamate 5-kinase family.

It is found in the cytoplasm. The catalysed reaction is L-glutamate + ATP = L-glutamyl 5-phosphate + ADP. It participates in amino-acid biosynthesis; L-proline biosynthesis; L-glutamate 5-semialdehyde from L-glutamate: step 1/2. Catalyzes the transfer of a phosphate group to glutamate to form L-glutamate 5-phosphate. In Geobacter metallireducens (strain ATCC 53774 / DSM 7210 / GS-15), this protein is Glutamate 5-kinase.